We begin with the raw amino-acid sequence, 360 residues long: Phospho-N-acetylmuramoyl-pentapeptide-transferase (360 aa).

Helical transmembrane passes span 21–41 (YLSF…LWMG), 73–93 (TMGG…WANL), 94–114 (SNPY…VGFV), 132–152 (WKYF…YAYG), 168–188 (VMPQ…VGTS), 199–219 (GLAI…AWAT), 236–256 (ASEL…FLWF), 263–283 (VFMG…IAVL), 288–308 (LVLV…ILQV), and 338–358 (VIVR…ATLK).

Belongs to the glycosyltransferase 4 family. MraY subfamily. Mg(2+) is required as a cofactor.

It is found in the cell inner membrane. It catalyses the reaction UDP-N-acetyl-alpha-D-muramoyl-L-alanyl-gamma-D-glutamyl-meso-2,6-diaminopimeloyl-D-alanyl-D-alanine + di-trans,octa-cis-undecaprenyl phosphate = di-trans,octa-cis-undecaprenyl diphospho-N-acetyl-alpha-D-muramoyl-L-alanyl-D-glutamyl-meso-2,6-diaminopimeloyl-D-alanyl-D-alanine + UMP. It participates in cell wall biogenesis; peptidoglycan biosynthesis. Its function is as follows. Catalyzes the initial step of the lipid cycle reactions in the biosynthesis of the cell wall peptidoglycan: transfers peptidoglycan precursor phospho-MurNAc-pentapeptide from UDP-MurNAc-pentapeptide onto the lipid carrier undecaprenyl phosphate, yielding undecaprenyl-pyrophosphoryl-MurNAc-pentapeptide, known as lipid I. This Vibrio vulnificus (strain YJ016) protein is Phospho-N-acetylmuramoyl-pentapeptide-transferase.